Here is a 319-residue protein sequence, read N- to C-terminus: Probable cytochrome c oxidase subunit 2 (319 aa).

An N-terminal signal peptide occupies residues 1 to 33 (MSPNGSDRSPRRPMRRKLLQALTAGLVLATATG). Helical transmembrane passes span 63–83 (WAAA…ATIF) and 101–121 (MPIE…LFYF). Cu cation contacts are provided by His-227, Cys-262, Cys-266, and His-270.

This sequence belongs to the cytochrome c oxidase subunit 2 family. It depends on Cu cation as a cofactor. Heme is required as a cofactor.

It is found in the cell membrane. It carries out the reaction 4 Fe(II)-[cytochrome c] + O2 + 8 H(+)(in) = 4 Fe(III)-[cytochrome c] + 2 H2O + 4 H(+)(out). Its function is as follows. Subunits I and II form the functional core of the enzyme complex. Electrons originating in cytochrome c are transferred via heme a and Cu(A) to the binuclear center formed by heme a3 and Cu(B). The polypeptide is Probable cytochrome c oxidase subunit 2 (ctaC) (Streptomyces avermitilis (strain ATCC 31267 / DSM 46492 / JCM 5070 / NBRC 14893 / NCIMB 12804 / NRRL 8165 / MA-4680)).